A 65-amino-acid polypeptide reads, in one-letter code: MPKMKTVSGAAKRFKKTGSGRFKSKQSHLRHILTKKSSKRKRHLRGKKLVHDSDTKLVQRMLPYV.

The tract at residues 1–30 is disordered; sequence MPKMKTVSGAAKRFKKTGSGRFKSKQSHLR. The span at 12-30 shows a compositional bias: basic residues; that stretch reads KRFKKTGSGRFKSKQSHLR.

This sequence belongs to the bacterial ribosomal protein bL35 family.

The chain is Large ribosomal subunit protein bL35 from Alteromonas mediterranea (strain DSM 17117 / CIP 110805 / LMG 28347 / Deep ecotype).